The chain runs to 509 residues: Histidine ammonia-lyase (509 aa).

Residues 144-146 constitute a cross-link (5-imidazolinone (Ala-Gly)); that stretch reads ASG. Position 145 is a 2,3-didehydroalanine (Ser) (Ser-145).

This sequence belongs to the PAL/histidase family. Contains an active site 4-methylidene-imidazol-5-one (MIO), which is formed autocatalytically by cyclization and dehydration of residues Ala-Ser-Gly.

The protein resides in the cytoplasm. It carries out the reaction L-histidine = trans-urocanate + NH4(+). Its pathway is amino-acid degradation; L-histidine degradation into L-glutamate; N-formimidoyl-L-glutamate from L-histidine: step 1/3. In Rhodospirillum centenum (strain ATCC 51521 / SW), this protein is Histidine ammonia-lyase.